The following is a 338-amino-acid chain: Glycerol-3-phosphate dehydrogenase [NAD(P)+] (338 aa).

Positions 13, 14, and 108 each coordinate NADPH. Lysine 108, glycine 139, and serine 141 together coordinate sn-glycerol 3-phosphate. Residue alanine 143 participates in NADPH binding. Sn-glycerol 3-phosphate contacts are provided by lysine 194, aspartate 247, serine 257, arginine 258, and asparagine 259. Lysine 194 serves as the catalytic Proton acceptor. Arginine 258 lines the NADPH pocket. 2 residues coordinate NADPH: valine 282 and glutamate 284.

This sequence belongs to the NAD-dependent glycerol-3-phosphate dehydrogenase family.

It localises to the cytoplasm. It catalyses the reaction sn-glycerol 3-phosphate + NAD(+) = dihydroxyacetone phosphate + NADH + H(+). The catalysed reaction is sn-glycerol 3-phosphate + NADP(+) = dihydroxyacetone phosphate + NADPH + H(+). Its pathway is membrane lipid metabolism; glycerophospholipid metabolism. Catalyzes the reduction of the glycolytic intermediate dihydroxyacetone phosphate (DHAP) to sn-glycerol 3-phosphate (G3P), the key precursor for phospholipid synthesis. The chain is Glycerol-3-phosphate dehydrogenase [NAD(P)+] from Streptococcus pyogenes serotype M28 (strain MGAS6180).